We begin with the raw amino-acid sequence, 178 residues long: Enhancer of split m5 protein (178 aa).

In terms of domain architecture, bHLH spans 18–73 (YLKVKKPLLERQRRARMNKCLDTLKTLVAEFQGDDAILRMDKAEMLEAALVFMRKQ). In terms of domain architecture, Orange spans 89–122 (FKNGYMNAVSEISRVMACTPAMSVDVGKTVMTHL). Residues 135–165 (VQTSVTTSTPRPLSPASSGYHSDNEDSQSAA) are compositionally biased toward polar residues. A disordered region spans residues 135–178 (VQTSVTTSTPRPLSPASSGYHSDNEDSQSAASPKPVEETMWRPW). Over residues 169-178 (PVEETMWRPW) the composition is skewed to basic and acidic residues. The WRPW motif signature appears at 175 to 178 (WRPW).

Transcription repression requires formation of a complex with a corepressor protein (Groucho). Forms homodimers.

The protein localises to the nucleus. In terms of biological role, participates in the control of cell fate choice by uncommitted neuroectodermal cells in the embryo. Transcriptional repressor. Binds DNA on N-box motifs: 5'-CACNAG-3'. This is Enhancer of split m5 protein from Drosophila melanogaster (Fruit fly).